The following is a 425-amino-acid chain: Septin-7 (425 aa).

A Septin-type G domain is found at 28–297 (RGFEFTLMVV…ENYRSRKLAA (270 aa)). The segment at 38-45 (GESGLGKS) is G1 motif. Residues 38–45 (GESGLGKS), Thr-71, Gly-97, 176–184 (KADTLTPEE), Gly-231, and Arg-246 each bind GTP. The interval 94–97 (DTPG) is G3 motif. The tract at residues 175-178 (AKAD) is G4 motif. Residues 324–421 (LAQMEEERRE…SRTLEKNKKK (98 aa)) adopt a coiled-coil conformation.

It belongs to the TRAFAC class TrmE-Era-EngA-EngB-Septin-like GTPase superfamily. Septin GTPase family. Monomer, and homodimer. Nucleotide binding promotes oligomerization. Can form heterooligomers with other family members and form filaments.

It localises to the cytoplasm. The protein localises to the chromosome. The protein resides in the centromere. It is found in the kinetochore. Its subcellular location is the cytoskeleton. It localises to the spindle. The protein localises to the cleavage furrow. The protein resides in the midbody. It is found in the cilium axoneme. Functionally, filament-forming cytoskeletal GTPase. Required for normal organization of the actin cytoskeleton. Required for normal progress through mitosis. Involved in cytokinesis. Plays a role in ciliogenesis and collective cell movements including convergent extension during gastrulation. Controls cell elongation but not polarization during convergent extension. This Xenopus laevis (African clawed frog) protein is Septin-7.